The sequence spans 421 residues: ATP-dependent RNA helicase RhlB (421 aa).

A Q motif motif is present at residues 9–37 (QKFSDFALHPKVVEVLEKKGFHNCTPIQA). The region spanning 40 to 219 (LPLTLAGRDV…FEQMNNAEYI (180 aa)) is the Helicase ATP-binding domain. An ATP-binding site is contributed by 53–60 (AQTGTGKT). The short motif at 165–168 (DEAD) is the DEAD box element. A Helicase C-terminal domain is found at 245–390 (RLLQTLIEEE…VSKYNPDALM (146 aa)). Positions 392–421 (DLPKPLRLTRPRTGNGPRRTGAPRNRRRSG) are disordered. The segment covering 402–414 (PRTGNGPRRTGAP) has biased composition (low complexity).

It belongs to the DEAD box helicase family. RhlB subfamily. As to quaternary structure, component of the RNA degradosome, which is a multiprotein complex involved in RNA processing and mRNA degradation.

It is found in the cytoplasm. The catalysed reaction is ATP + H2O = ADP + phosphate + H(+). Its function is as follows. DEAD-box RNA helicase involved in RNA degradation. Has RNA-dependent ATPase activity and unwinds double-stranded RNA. This Shigella boydii serotype 18 (strain CDC 3083-94 / BS512) protein is ATP-dependent RNA helicase RhlB.